An 835-amino-acid polypeptide reads, in one-letter code: Ribonuclease R (835 aa).

The RNB domain occupies 267–593 (RVDLRELPLV…LLHRAIKYLI (327 aa)). The 82-residue stretch at 652–733 (GDELEGVIAN…DDKQIDFELV (82 aa)) folds into the S1 motif domain. Positions 739–754 (LRGEGKTAKKRAAEAK) are enriched in basic and acidic residues. The disordered stretch occupies residues 739–835 (LRGEGKTAKK…KTKRTKQDAQ (97 aa)). Over residues 755–764 (RKAKEKKRAA) the composition is skewed to basic residues. The span at 765 to 777 (TRSSSKESATARA) shows a compositional bias: low complexity. Residues 783–793 (PTKRPEQTDSG) show a composition bias toward basic and acidic residues. Residues 809-829 (KPKVKKAHKKKPHSKPKKTKR) are compositionally biased toward basic residues.

The protein belongs to the RNR ribonuclease family. RNase R subfamily.

The protein resides in the cytoplasm. The enzyme catalyses Exonucleolytic cleavage in the 3'- to 5'-direction to yield nucleoside 5'-phosphates.. Functionally, 3'-5' exoribonuclease that releases 5'-nucleoside monophosphates and is involved in maturation of structured RNAs. This chain is Ribonuclease R, found in Vibrio parahaemolyticus serotype O3:K6 (strain RIMD 2210633).